Here is a 76-residue protein sequence, read N- to C-terminus: Conotoxin VnMEKL-021 (76 aa).

An N-terminal signal peptide occupies residues 1–19 (MQKLTILLLVAAVLMSTQA). The propeptide occupies 20–37 (LIKGGGEKRPKEKIKFLS). Disulfide bonds link C51–C65, C58–C69, and C64–C73.

It belongs to the conotoxin O2 superfamily. As to expression, expressed by the venom duct.

It localises to the secreted. This Conus ventricosus (Mediterranean cone) protein is Conotoxin VnMEKL-021.